We begin with the raw amino-acid sequence, 433 residues long: Glutamate-1-semialdehyde 2,1-aminomutase (433 aa).

K273 bears the N6-(pyridoxal phosphate)lysine mark.

This sequence belongs to the class-III pyridoxal-phosphate-dependent aminotransferase family. HemL subfamily. In terms of assembly, homodimer. The cofactor is pyridoxal 5'-phosphate.

It is found in the cytoplasm. The enzyme catalyses (S)-4-amino-5-oxopentanoate = 5-aminolevulinate. It functions in the pathway porphyrin-containing compound metabolism; protoporphyrin-IX biosynthesis; 5-aminolevulinate from L-glutamyl-tRNA(Glu): step 2/2. The protein operates within porphyrin-containing compound metabolism; chlorophyll biosynthesis. The sequence is that of Glutamate-1-semialdehyde 2,1-aminomutase from Microcystis aeruginosa (strain NIES-843 / IAM M-2473).